The chain runs to 634 residues: Growth hormone receptor (634 aa).

Positions 1–18 are cleaved as a signal peptide; sequence MDLWQLLLTLAVAGSSDA. The Extracellular segment spans residues 19 to 260; the sequence is FSGSEATPAF…NPSACEEDFQ (242 aa). An N-linked (GlcNAc...) asparagine glycan is attached at Asn-46. A disulfide bond links Cys-56 and Cys-66. Asn-73 carries N-linked (GlcNAc...) asparagine glycosylation. The cysteines at positions 97 and 108 are disulfide-linked. An N-linked (GlcNAc...) asparagine glycan is attached at Asn-111. The cysteines at positions 122 and 136 are disulfide-linked. The region spanning 147–250 is the Fibronectin type-III domain; that stretch reads PPVGLNWTLL…EVLLITFPQM (104 aa). N-linked (GlcNAc...) asparagine glycosylation is found at Asn-152, Asn-157, and Asn-196. A WSXWS motif motif is present at residues 236–240; it reads YGKFS. A helical transmembrane segment spans residues 261–284; it reads FPWFLIIIFGILGLAVTLYLLIFS. Residues 285–634 lie on the Cytoplasmic side of the membrane; sequence KQQRIKMLIL…STDQLNKIMP (350 aa). Residues 290–375 are required for JAK2 binding; it reads KMLILPPVPV…HEKSLNIFGA (86 aa). The short motif at 293–301 is the Box 1 motif element; it reads ILPPVPVPK. The UbE motif motif lies at 336–345; the sequence is DSWVEFIELD. A Phosphoserine modification is found at Ser-337.

This sequence belongs to the type I cytokine receptor family. Type 1 subfamily. On growth hormone (GH) binding, forms homodimers and binds JAK2 via a box 1-containing domain. The soluble form (GHBP) is produced by phorbol ester-promoted proteolytic cleavage at the cell surface (shedding) by ADAM17/TACE. Shedding is inhibited by growth hormone (GH) binding to the receptor probably due to a conformational change in GHR rendering the receptor inaccessible to ADAM17. In terms of processing, on GH binding, phosphorylated on tyrosine residues in the cytoplasmic domain by JAK2. Post-translationally, ubiquitinated by the ECS(SOCS2) complex following ligand-binding and phosphorylation by JAK2, leading to its degradation by the proteasome. Regulation by the ECS(SOCS2) complex acts as a negative feedback loop of growth hormone receptor signaling. Ubiquitination is not sufficient for GHR internalization.

The protein localises to the cell membrane. Its subcellular location is the secreted. Its function is as follows. Receptor for pituitary gland growth hormone (GH1) involved in regulating postnatal body growth. On ligand binding, couples to the JAK2/STAT5 pathway. The soluble form (GHBP) acts as a reservoir of growth hormone in plasma and may be a modulator/inhibitor of GH signaling. This is Growth hormone receptor (GHR) from Bos taurus (Bovine).